A 309-amino-acid polypeptide reads, in one-letter code: MEGTGVVAVYGNGAITEAKKSPFSVKVGLAQMLRGGVIMDVVNAEQARIAEEAGACAVMALERVPADIRAQGGVARMSDPQMIKEIKQAVTIPVMAKARIGHFVEAQILEAIGIDYIDESEVLTLADEDHHINKHNFRIPFVCGCRNLGEALRRIREGAAMIRTKGEAGTGNIIEAVRHVRSVNGDIRVLRNMDDDEVFTFAKKLAAPYDLVMQTKQLGRLPVVQFAAGGVATPADAALMMQLGCDGVFVGSGIFKSGDPARRARAIVQAVTHYSDPEMLVEVSCGLGEAMVGINLNDEKVERFANRSE.

Met1 carries the post-translational modification N-acetylmethionine. Position 40 (Asp40) interacts with D-ribose 5-phosphate. The active-site Schiff-base intermediate with D-ribose 5-phosphate is Lys97. D-ribose 5-phosphate is bound at residue Gly169. Residue Arg181 participates in D-glyceraldehyde 3-phosphate binding. D-ribose 5-phosphate-binding positions include Gly230 and 251-252 (GS).

It belongs to the PdxS/SNZ family. In terms of assembly, homodimer or heterodimer with PDX1.1 or PDX1.2. Interacts with PDX2. As to expression, expressed in cotyledons, rapidly dividing root stele tissues, stems, leaves, flowers, mature pollen, and siliques.

The protein localises to the cytoplasm. It localises to the cell membrane. Its subcellular location is the membrane. The enzyme catalyses aldehydo-D-ribose 5-phosphate + D-glyceraldehyde 3-phosphate + L-glutamine = pyridoxal 5'-phosphate + L-glutamate + phosphate + 3 H2O + H(+). The protein operates within cofactor biosynthesis; pyridoxal 5'-phosphate biosynthesis. Its function is as follows. Catalyzes the formation of pyridoxal 5'-phosphate from ribose 5-phosphate (RBP), glyceraldehyde 3-phosphate (G3P) and ammonia. The ammonia is provided by PDX2. Can also use ribulose 5-phosphate and dihydroxyacetone phosphate as substrates, resulting from enzyme-catalyzed isomerization of RBP and G3P, respectively. Also plays an indirect role in resistance to singlet oxygen-generating photosensitizers. This is Pyridoxal 5'-phosphate synthase subunit PDX1.3 (PDX13) from Arabidopsis thaliana (Mouse-ear cress).